The primary structure comprises 479 residues: Probable aspartic-type endopeptidase OPSB (479 aa).

The N-terminal stretch at 1-19 (MRGDSFIWSLTTAASLLYA) is a signal peptide. The Peptidase A1 domain maps to 58 to 393 (SGKTVSQDLD…DLDNNEISIA (336 aa)). N-linked (GlcNAc...) asparagine glycosylation occurs at N68. D76 is an active-site residue. The N-linked (GlcNAc...) asparagine glycan is linked to N121. Residue D275 is part of the active site. N398 carries N-linked (GlcNAc...) asparagine glycosylation. The disordered stretch occupies residues 435–454 (LSGIETGVPGARPTSRGAAP). The GPI-anchor amidated glycine moiety is linked to residue G451. Residues 452-479 (AAPTMRPDVTFGVAAAGLAGAGILFAFM) constitute a propeptide, removed in mature form.

Belongs to the peptidase A1 family.

The protein localises to the cell membrane. Functionally, probable GPI-anchored aspartic-type endopeptidase which contributes to virulence. This chain is Probable aspartic-type endopeptidase OPSB (OPSB), found in Arthroderma otae (strain ATCC MYA-4605 / CBS 113480) (Microsporum canis).